Consider the following 218-residue polypeptide: tRNA (guanine-N(7)-)-methyltransferase (218 aa).

The interval 1 to 25 (MRLKNKPWANELVEEHPESALDRPN) is disordered. Residues 13-25 (VEEHPESALDRPN) show a composition bias toward basic and acidic residues. Residues E45, E70, D97, and D119 each coordinate S-adenosyl-L-methionine. D119 is an active-site residue. Residue K123 participates in substrate binding. Positions 125–130 (RHEKRR) are interaction with RNA. Residues D155 and 195–198 (TEYE) contribute to the substrate site.

Belongs to the class I-like SAM-binding methyltransferase superfamily. TrmB family.

The enzyme catalyses guanosine(46) in tRNA + S-adenosyl-L-methionine = N(7)-methylguanosine(46) in tRNA + S-adenosyl-L-homocysteine. Its pathway is tRNA modification; N(7)-methylguanine-tRNA biosynthesis. Catalyzes the formation of N(7)-methylguanine at position 46 (m7G46) in tRNA. The chain is tRNA (guanine-N(7)-)-methyltransferase from Lactobacillus delbrueckii subsp. bulgaricus (strain ATCC BAA-365 / Lb-18).